Consider the following 66-residue polypeptide: MPKQKTHRASAKRFKRTGSGGLKRFRAYTSHRFHGKTKKQRRHLRKASMVHSGDFKRIKAMLTRLK.

A compositionally biased stretch (basic residues) spans 1 to 16 (MPKQKTHRASAKRFKR). The disordered stretch occupies residues 1–21 (MPKQKTHRASAKRFKRTGSGG).

Belongs to the bacterial ribosomal protein bL35 family.

This chain is Large ribosomal subunit protein bL35, found in Streptococcus gordonii (strain Challis / ATCC 35105 / BCRC 15272 / CH1 / DL1 / V288).